A 272-amino-acid chain; its full sequence is Putative hydro-lyase RPB_3621 (272 aa).

This sequence belongs to the D-glutamate cyclase family.

The chain is Putative hydro-lyase RPB_3621 from Rhodopseudomonas palustris (strain HaA2).